Reading from the N-terminus, the 758-residue chain is Meiotic driver SPOK4 (758 aa).

A coiled-coil region spans residues 4 to 41; the sequence is KDRITQLLRKLEEAKAREEEAKAREAQERCEKERLQLE. 2 disordered regions span residues 180–230 and 414–499; these read ELTQ…GVGI and LSSA…MADP. Over residues 181–190 the composition is skewed to basic and acidic residues; sequence LTQEDDRSSG. Residues 416–429 are compositionally biased toward polar residues; the sequence is SAASSQNTENSEYT. The span at 457–468 shows a compositional bias: basic and acidic residues; sequence NEHDEHDEDHSE.

It is found in the cytoplasm. It localises to the nucleus. Functionally, promotes unequal transmission of alleles from the parental zygote to progeny spores by acting as poison/antidote system, leading to poisoning of progeny that do not inherit the allele. May possess DNA nuclease activity that leads to spore killing, and a kinase activity that confers resistance to the nuclease activity. Can suppress meiotic drive by the P.comata SPOK1 protein. This chain is Meiotic driver SPOK4, found in Podospora anserina (Pleurage anserina).